A 52-amino-acid chain; its full sequence is Alpha-crystallin B chain (52 aa).

It belongs to the small heat shock protein (HSP20) family. Homodimer. Aggregates with homologous proteins, including alpha-A-crystallin and the small heat shock protein HSPB1, to form large heteromeric complexes.

May contribute to the transparency and refractive index of the lens. The chain is Alpha-crystallin B chain (CRYAB) from Turdus merula (Common blackbird).